The primary structure comprises 952 residues: Leucine--tRNA ligase (952 aa).

The short motif at 66 to 77 is the 'HIGH' region element; the sequence is PYPSGAGLHVGH. Positions 722–726 match the 'KMSKS' region motif; the sequence is KMGKS. ATP is bound at residue Lys-725.

Belongs to the class-I aminoacyl-tRNA synthetase family.

Its subcellular location is the cytoplasm. It carries out the reaction tRNA(Leu) + L-leucine + ATP = L-leucyl-tRNA(Leu) + AMP + diphosphate. The chain is Leucine--tRNA ligase from Corynebacterium glutamicum (strain ATCC 13032 / DSM 20300 / JCM 1318 / BCRC 11384 / CCUG 27702 / LMG 3730 / NBRC 12168 / NCIMB 10025 / NRRL B-2784 / 534).